The chain runs to 175 residues: Ribosome maturation factor RimM (175 aa).

The PRC barrel domain occupies Asn-97 to Trp-170.

Belongs to the RimM family. Binds ribosomal protein uS19.

Its subcellular location is the cytoplasm. Functionally, an accessory protein needed during the final step in the assembly of 30S ribosomal subunit, possibly for assembly of the head region. Essential for efficient processing of 16S rRNA. May be needed both before and after RbfA during the maturation of 16S rRNA. It has affinity for free ribosomal 30S subunits but not for 70S ribosomes. This is Ribosome maturation factor RimM from Dichelobacter nodosus (strain VCS1703A).